The sequence spans 142 residues: Cell division protein SepF (142 aa).

It belongs to the SepF family. As to quaternary structure, homodimer. Interacts with FtsZ.

The protein resides in the cytoplasm. In terms of biological role, cell division protein that is part of the divisome complex and is recruited early to the Z-ring. Probably stimulates Z-ring formation, perhaps through the cross-linking of FtsZ protofilaments. Its function overlaps with FtsA. This chain is Cell division protein SepF, found in Geobacillus kaustophilus (strain HTA426).